The chain runs to 142 residues: Pro-Viral epidermal growth factor (142 aa).

Positions 1–19 (MSIKYLMLLFAAMIIRSLA) are cleaved as a signal peptide. The Extracellular portion of the chain corresponds to 20–104 (DSGNAIETTS…DTTTSYIPSL (85 aa)). N-linked (GlcNAc...) asparagine; by host glycosylation is present at asparagine 34. Cysteine 71 and cysteine 80 are joined by a disulfide. Residues 105 to 125 (GIVLVLVGIIITCCLLSVYMF) traverse the membrane as a helical segment. Residues 126 to 142 (TRRTKLPIQDMVVLYFL) lie on the Cytoplasmic side of the membrane.

This sequence belongs to the orthopoxvirus OPG019 family. Interacts with host EGFR. Post-translationally, cleaved at the cell surface by host ADAM10, thereby releasing the secreted form of VGF.

The protein resides in the host membrane. It localises to the secreted. Stimulates cellular proliferation (hyperplasia)and mobility around infected cells to promote rapid and efficient spread of infection. This effect is beneficial for virus replication in vivo, because poxviruses replicate possibly better in proliferating cells than in quiescent cells. Acts by binding host EGFR, inducing its dimerization, autophosphorylation and leading to activation of several cellular pathways regulating cell proliferation or cell survival. The activation by host EGFR of mitogen activated protein kinases (MAPK) and extracellular-signal regulated kinases (ERK) are essential for the positive effect of vaccinia growth factor on poxvirus virulence in vivo. This is Pro-Viral epidermal growth factor (OPG019) from Cynomys gunnisoni (Gunnison's prairie dog).